The sequence spans 96 residues: Acylphosphatase (96 aa).

One can recognise an Acylphosphatase-like domain in the interval 4 to 91; that stretch reads RVHVYVKGKV…GEFDDFRILY (88 aa). Active-site residues include Arg-19 and Asn-37.

Belongs to the acylphosphatase family.

It carries out the reaction an acyl phosphate + H2O = a carboxylate + phosphate + H(+). The sequence is that of Acylphosphatase (acyP) from Syntrophus aciditrophicus (strain SB).